Reading from the N-terminus, the 125-residue chain is MADLNKLAEDIVGLTLLEAQELKTILKDKYGIEPAAGGAVMMAGPAAGAAAPAEEEKTEFDVVLTDAGANKINVIKEVRAITGLGLKEAKDLVEAGGKVKEAVAKADAEAMKKKLEEAGAKVELK.

This sequence belongs to the bacterial ribosomal protein bL12 family. Homodimer. Part of the ribosomal stalk of the 50S ribosomal subunit. Forms a multimeric L10(L12)X complex, where L10 forms an elongated spine to which 2 to 4 L12 dimers bind in a sequential fashion. Binds GTP-bound translation factors.

In terms of biological role, forms part of the ribosomal stalk which helps the ribosome interact with GTP-bound translation factors. Is thus essential for accurate translation. The chain is Large ribosomal subunit protein bL12 from Cereibacter sphaeroides (strain ATCC 17023 / DSM 158 / JCM 6121 / CCUG 31486 / LMG 2827 / NBRC 12203 / NCIMB 8253 / ATH 2.4.1.) (Rhodobacter sphaeroides).